Here is a 127-residue protein sequence, read N- to C-terminus: Histone H2B type 1-A (127 aa).

The tract at residues 1–32 (MPEVSAKGTTISKKGFKKAVTKTQKKEGRKRK) is disordered. P2 is modified (N-acetylproline). N6-acetyllysine; alternate occurs at positions 7, 13, 14, 17, 18, 22, and 25. An N6-crotonyllysine; alternate mark is found at K7, K13, K14, K17, K18, K22, K25, and K36. N6-lactoyllysine; alternate occurs at positions 7 and 13. K7 participates in a covalent cross-link: Glycyl lysine isopeptide (Lys-Gly) (interchain with G-Cter in SUMO2); alternate. N6-lactoyllysine; alternate occurs at positions 17, 18, 22, and 25. K22 is covalently cross-linked (Glycyl lysine isopeptide (Lys-Gly) (interchain with G-Cter in SUMO2); alternate). N6-succinyllysine; alternate is present on K36. K36 participates in a covalent cross-link: Glycyl lysine isopeptide (Lys-Gly) (interchain with G-Cter in ubiquitin); alternate. Position 38 is a phosphoserine (S38). An N6-lactoyllysine; alternate modification is found at K45. K48 carries the N6-methyllysine modification. At K59 the chain carries N6,N6-dimethyllysine. The residue at position 81 (R81) is a Dimethylated arginine. K87 carries the N6-acetyllysine; alternate modification. K87 is subject to N6-lactoyllysine; alternate. Position 87 is an N6,N6,N6-trimethyllysine; alternate (K87). Omega-N-methylarginine is present on residues R88 and R94. K110 bears the N6-lactoyllysine; alternate mark. At K110 the chain carries N6-methyllysine. Position 117 is a phosphothreonine (T117). Residues K118 and K122 each carry the N6-lactoyllysine; alternate modification. N6-succinyllysine; alternate occurs at positions 118 and 122. At K118 the chain carries N6-methylated lysine; alternate. K122 participates in a covalent cross-link: Glycyl lysine isopeptide (Lys-Gly) (interchain with G-Cter in ubiquitin); alternate.

This sequence belongs to the histone H2B family. As to quaternary structure, the nucleosome is a histone octamer containing two molecules each of H2A, H2B, H3 and H4 assembled in one H3-H4 heterotetramer and two H2A-H2B heterodimers. Monoubiquitination at Lys-36 by the MSL1/MSL2 dimer is required for histone H3 'Lys-4' (H3K4me) and 'Lys-79' (H3K79me) methylation and transcription activation at specific gene loci, such as HOXA9 and MEIS1 loci. Similarly, monoubiquitination of Lys-122 (H2BK120Ub) by the RNF20/40 complex gives a specific tag for epigenetic transcriptional activation and is also prerequisite for histone H3 'Lys-4' and 'Lys-79' methylation. It also functions cooperatively with the FACT dimer to stimulate elongation by RNA polymerase II. H2BK120Ub also acts as a regulator of mRNA splicing: deubiquitination by USP49 is required for efficient cotranscriptional splicing of a large set of exons. Post-translationally, crotonylation (Kcr) is specifically present in male germ cells and marks testis-specific genes in post-meiotic cells, including X-linked genes that escape sex chromosome inactivation in haploid cells. Crotonylation marks active promoters and enhancers and confers resistance to transcriptional repressors. It is also associated with post-meiotically activated genes on autosomes. In terms of processing, acetylated during spermatogenesis. Acetylated form is most abundant in spermatogonia compared to spermatocytes and round spermatids. Phosphorylated at Thr-117 in spermatogonia, spermatocytes and round spermatids. Post-translationally, methylated at Lys-118 in spermatogonia, spermatocytes and round spermatids. In terms of processing, lactylated in macrophages by EP300/P300 by using lactoyl-CoA directly derived from endogenous or exogenous lactate, leading to stimulates gene transcription. As to expression, testis. Expressed in pachytene spermatocytes during meiotic prophase I in the absence of any significant DNA synthesis.

Its subcellular location is the nucleus. The protein resides in the chromosome. Variant histone specifically required to direct the transformation of dissociating nucleosomes to protamine in male germ cells. Entirely replaces classical histone H2B prior nucleosome to protamine transition and probably acts as a nucleosome dissociating factor that creates a more dynamic chromatin, facilitating the large-scale exchange of histones. Core component of nucleosome. Nucleosomes wrap and compact DNA into chromatin, limiting DNA accessibility to the cellular machineries which require DNA as a template. Histones thereby play a central role in transcription regulation, DNA repair, DNA replication and chromosomal stability. DNA accessibility is regulated via a complex set of post-translational modifications of histones, also called histone code, and nucleosome remodeling. The polypeptide is Histone H2B type 1-A (Rattus norvegicus (Rat)).